The sequence spans 140 residues: MERTLTILKPDCVRKQLIGAVINHIERAGFRVVAMKKIHLTKEAAGEFYAVHRERPFYGELVDFMSSGACVPMILEKENAVADFRTVIGATDPAEAAEGTVRKLYADSKGENIIHGSDSVENAAIEAAFFFSTEEVVRSN.

ATP contacts are provided by lysine 9, phenylalanine 57, arginine 85, threonine 91, arginine 102, and asparagine 112. The active-site Pros-phosphohistidine intermediate is the histidine 115.

This sequence belongs to the NDK family. Homotetramer. The cofactor is Mg(2+).

The protein resides in the cytoplasm. The catalysed reaction is a 2'-deoxyribonucleoside 5'-diphosphate + ATP = a 2'-deoxyribonucleoside 5'-triphosphate + ADP. The enzyme catalyses a ribonucleoside 5'-diphosphate + ATP = a ribonucleoside 5'-triphosphate + ADP. Functionally, major role in the synthesis of nucleoside triphosphates other than ATP. The ATP gamma phosphate is transferred to the NDP beta phosphate via a ping-pong mechanism, using a phosphorylated active-site intermediate. The polypeptide is Nucleoside diphosphate kinase (Chlorobium chlorochromatii (strain CaD3)).